The sequence spans 229 residues: Ribonuclease 3 (229 aa).

Residues 4–133 (WEELQESVGF…FIGALYLDNG (130 aa)) form the RNase III domain. Residue Glu-46 coordinates Mg(2+). The active site involves Asp-50. Mg(2+) contacts are provided by Asp-119 and Glu-122. Glu-122 is an active-site residue. One can recognise a DRBM domain in the interval 159 to 228 (DYKTQLQEIV…AQFAINQLTH (70 aa)).

It belongs to the ribonuclease III family. As to quaternary structure, homodimer. Requires Mg(2+) as cofactor.

Its subcellular location is the cytoplasm. It carries out the reaction Endonucleolytic cleavage to 5'-phosphomonoester.. Functionally, digests double-stranded RNA. Involved in the processing of primary rRNA transcript to yield the immediate precursors to the large and small rRNAs (23S and 16S). Processes some mRNAs, and tRNAs when they are encoded in the rRNA operon. Processes pre-crRNA and tracrRNA of type II CRISPR loci if present in the organism. This chain is Ribonuclease 3, found in Listeria innocua serovar 6a (strain ATCC BAA-680 / CLIP 11262).